A 567-amino-acid chain; its full sequence is Proline--tRNA ligase (567 aa).

The protein belongs to the class-II aminoacyl-tRNA synthetase family. ProS type 1 subfamily. In terms of assembly, homodimer.

Its subcellular location is the cytoplasm. The enzyme catalyses tRNA(Pro) + L-proline + ATP = L-prolyl-tRNA(Pro) + AMP + diphosphate. Its function is as follows. Catalyzes the attachment of proline to tRNA(Pro) in a two-step reaction: proline is first activated by ATP to form Pro-AMP and then transferred to the acceptor end of tRNA(Pro). As ProRS can inadvertently accommodate and process non-cognate amino acids such as alanine and cysteine, to avoid such errors it has two additional distinct editing activities against alanine. One activity is designated as 'pretransfer' editing and involves the tRNA(Pro)-independent hydrolysis of activated Ala-AMP. The other activity is designated 'posttransfer' editing and involves deacylation of mischarged Ala-tRNA(Pro). The misacylated Cys-tRNA(Pro) is not edited by ProRS. This chain is Proline--tRNA ligase, found in Staphylococcus epidermidis (strain ATCC 35984 / DSM 28319 / BCRC 17069 / CCUG 31568 / BM 3577 / RP62A).